The following is a 407-amino-acid chain: Multifunctional CCA protein (407 aa).

Glycine 8 and arginine 11 together coordinate ATP. CTP-binding residues include glycine 8 and arginine 11. Mg(2+)-binding residues include aspartate 21 and aspartate 23. ATP is bound by residues arginine 91, arginine 137, and arginine 140. Arginine 91, arginine 137, and arginine 140 together coordinate CTP. The HD domain maps to 228-329 (TGIHTLMVAQ…IKIFDKMDVW (102 aa)).

This sequence belongs to the tRNA nucleotidyltransferase/poly(A) polymerase family. Bacterial CCA-adding enzyme type 1 subfamily. As to quaternary structure, monomer. Can also form homodimers and oligomers. Mg(2+) is required as a cofactor. The cofactor is Ni(2+).

The catalysed reaction is a tRNA precursor + 2 CTP + ATP = a tRNA with a 3' CCA end + 3 diphosphate. It catalyses the reaction a tRNA with a 3' CCA end + 2 CTP + ATP = a tRNA with a 3' CCACCA end + 3 diphosphate. In terms of biological role, catalyzes the addition and repair of the essential 3'-terminal CCA sequence in tRNAs without using a nucleic acid template. Adds these three nucleotides in the order of C, C, and A to the tRNA nucleotide-73, using CTP and ATP as substrates and producing inorganic pyrophosphate. tRNA 3'-terminal CCA addition is required both for tRNA processing and repair. Also involved in tRNA surveillance by mediating tandem CCA addition to generate a CCACCA at the 3' terminus of unstable tRNAs. While stable tRNAs receive only 3'-terminal CCA, unstable tRNAs are marked with CCACCA and rapidly degraded. The polypeptide is Multifunctional CCA protein (Aliivibrio fischeri (strain ATCC 700601 / ES114) (Vibrio fischeri)).